A 136-amino-acid polypeptide reads, in one-letter code: Type II nicking enzyme V.XorIIP (136 aa).

It belongs to the Vsr family.

Its function is as follows. May nick XorII sequences that contain T/G mispairs resulting from m5C-deamination. If unrepaired, these mismatches can lead to C-to-T transition mutations. The very short patch (VSP) repair process counteracts the mutagenic process by repairing the mismatches in favor of the G-containing strand. This enzyme is an endonuclease that nicks double-stranded DNA within the sequence CGATCG (C-methylation site unknown) next to the thymidine residue that is mismatched to 2'-deoxyguanosine. The incision is mismatch-dependent and strand-specific. The protein is Type II nicking enzyme V.XorIIP of Xanthomonas oryzae pv. oryzae (strain KACC10331 / KXO85).